The chain runs to 282 residues: MSGADRIPAAGAAPDSASGRAAVASAYQRFEPRAYLRNNYAPPRGDLCNPNGVGPWKLRCLAQTFATGEVSGRTLIDIGSGPTVYQLLSACSHFEDITMTDFLEVNRQELGRWLREEPGAFNWSMYSQYACLIEGKGESWQEKERQLRARVKRVLPIDVHQPQPLGTGSPAPLPADTLVSAFCLEAVSPDLASFQRALDHITTLLRPGGHLLLIGALEESWYLAGEARLMVVPVSEEEVREALVRSGYEVRDLRTYIMPAHLQTGVDDVKGIFFAWAQKVGL.

S-adenosyl-L-methionine contacts are provided by residues Tyr-35, Tyr-40, 79–80 (GS), Tyr-85, Asp-101, Asn-106, 158–159 (DV), and Ala-181. Octopamine-binding residues include Glu-219 and Asp-267.

The protein belongs to the class I-like SAM-binding methyltransferase superfamily. NNMT/PNMT/TEMT family. As to expression, expressed in the adrenal medulla.

The enzyme catalyses phenylethanolamine + S-adenosyl-L-methionine = N-methylphenylethanolamine + S-adenosyl-L-homocysteine + H(+). The catalysed reaction is (R)-noradrenaline + S-adenosyl-L-methionine = (R)-adrenaline + S-adenosyl-L-homocysteine + H(+). It carries out the reaction (R)-normetanephrine + S-adenosyl-L-methionine = (R)-metanephrine + S-adenosyl-L-homocysteine + H(+). It catalyses the reaction (R)-octopamine + S-adenosyl-L-methionine = (R)-synephrine + S-adenosyl-L-homocysteine + H(+). It participates in catecholamine biosynthesis; (R)-adrenaline biosynthesis; (R)-adrenaline from (R)-noradrenaline: step 1/1. Its activity is regulated as follows. Inhibited by p-chloromercuribenaoate. In terms of biological role, catalyzes the transmethylation of nonepinephrine (noradrenaline) to form epinephrine (adrenaline), using S-adenosyl-L-methionine as the methyl donor. Other substrates include phenylethanolamine, octopamine and normetanephrine. The polypeptide is Phenylethanolamine N-methyltransferase (PNMT) (Macaca mulatta (Rhesus macaque)).